Consider the following 443-residue polypeptide: Cysteine proteinase B (443 aa).

The first 27 residues, 1–27 (MATSRAALCAVAVVCVVLAAACAPARA), serve as a signal peptide directing secretion. The propeptide at 28 to 125 (IHVGTPAAAL…YRKARADLSA (98 aa)) is activation peptide. 2 disulfide bridges follow: cysteine 147/cysteine 188 and cysteine 181/cysteine 226. Residue cysteine 150 is part of the active site. Residue asparagine 228 is glycosylated (N-linked (GlcNAc...) asparagine). Residues cysteine 281 and cysteine 329 are joined by a disulfide bond. Residues histidine 288 and asparagine 308 contribute to the active site.

It belongs to the peptidase C1 family.

The protein is Cysteine proteinase B (LMCPB) of Leishmania mexicana.